A 315-amino-acid polypeptide reads, in one-letter code: MQCNDVQATEPDIKVSLTRVGVTNLKKLVKLKRTNKRDIVLLPTFEVFVDLPSSQKGIHMSRSPEVIEEVVENILLEKEIYGVEDLSVEIVMKLFEKHEYATRAEIMLYSDYMMEEKSPVTQKDSQEIGKIIARAYGVKDENGKIHVKKMVGAEVVGITACPCAQNMLKENAVTSLKEKGFSNEEIEKILDSVTIATHNQRGIGTVMIEVPNGYTVGISKIIKIIKDSMSGEVYELLKRSDEAFVVETAHKNPKFVEDCAREMIKRVVDVFDYLPEDTQVLVRQVNKESIHRHDAFAERNSTLRELRDELKTLTN.

The protein belongs to the GTP cyclohydrolase IV family. As to quaternary structure, homodimer. Fe(2+) serves as cofactor.

It catalyses the reaction GTP + H2O = 7,8-dihydroneopterin 2',3'-cyclic phosphate + formate + diphosphate + H(+). It functions in the pathway cofactor biosynthesis; 5,6,7,8-tetrahydromethanopterin biosynthesis. In terms of biological role, converts GTP to 7,8-dihydro-D-neopterin 2',3'-cyclic phosphate, the first intermediate in the biosynthesis of coenzyme methanopterin. The protein is GTP cyclohydrolase MptA of Methanococcus maripaludis (strain C6 / ATCC BAA-1332).